The primary structure comprises 303 residues: Diaminopimelate epimerase (303 aa).

Positions 15, 47, and 67 each coordinate substrate. Catalysis depends on Cys-76, which acts as the Proton donor. Residues 77–78 (GN), Asn-163, Asn-197, and 215–216 (ER) contribute to the substrate site. Cys-224 functions as the Proton acceptor in the catalytic mechanism. Substrate is bound at residue 225 to 226 (GS). The tract at residues 279 to 303 (DPATGEWSRDTQGLQGSGNADRGTA) is disordered.

This sequence belongs to the diaminopimelate epimerase family. Homodimer.

Its subcellular location is the cytoplasm. It catalyses the reaction (2S,6S)-2,6-diaminopimelate = meso-2,6-diaminopimelate. It participates in amino-acid biosynthesis; L-lysine biosynthesis via DAP pathway; DL-2,6-diaminopimelate from LL-2,6-diaminopimelate: step 1/1. Catalyzes the stereoinversion of LL-2,6-diaminopimelate (L,L-DAP) to meso-diaminopimelate (meso-DAP), a precursor of L-lysine and an essential component of the bacterial peptidoglycan. This Brucella canis (strain ATCC 23365 / NCTC 10854 / RM-666) protein is Diaminopimelate epimerase.